The primary structure comprises 525 residues: Rho guanine nucleotide exchange factor gef3 (525 aa).

The DH domain occupies 72 to 268 (AIISVLEEFR…EIASQRMNEL (197 aa)).

The protein localises to the cytoplasm. Functionally, has a role in the control of cell polarity and cytokinesis. Involved in bipolar growth and septum formation. This is Rho guanine nucleotide exchange factor gef3 (gef3) from Schizosaccharomyces pombe (strain 972 / ATCC 24843) (Fission yeast).